Consider the following 347-residue polypeptide: Biotin synthase (347 aa).

Positions Ala-40 to Arg-258 constitute a Radical SAM core domain. Residues Cys-55, Cys-59, and Cys-62 each contribute to the [4Fe-4S] cluster site. 4 residues coordinate [2Fe-2S] cluster: Cys-99, Cys-130, Cys-190, and Arg-262.

This sequence belongs to the radical SAM superfamily. Biotin synthase family. In terms of assembly, homodimer. [4Fe-4S] cluster is required as a cofactor. Requires [2Fe-2S] cluster as cofactor.

The enzyme catalyses (4R,5S)-dethiobiotin + (sulfur carrier)-SH + 2 reduced [2Fe-2S]-[ferredoxin] + 2 S-adenosyl-L-methionine = (sulfur carrier)-H + biotin + 2 5'-deoxyadenosine + 2 L-methionine + 2 oxidized [2Fe-2S]-[ferredoxin]. It functions in the pathway cofactor biosynthesis; biotin biosynthesis; biotin from 7,8-diaminononanoate: step 2/2. Functionally, catalyzes the conversion of dethiobiotin (DTB) to biotin by the insertion of a sulfur atom into dethiobiotin via a radical-based mechanism. The sequence is that of Biotin synthase from Stenotrophomonas maltophilia (strain R551-3).